The primary structure comprises 388 residues: Sphingosine N-acyltransferase-like protein FUM17 (388 aa).

The next 2 membrane-spanning stretches (helical) occupy residues 60–80 (SWAL…IHPV) and 113–133 (LWDL…RKFI). N-linked (GlcNAc...) asparagine glycosylation occurs at Asn-146. One can recognise a TLC domain in the interval 151–368 (GKQQRFMEQM…LLRNAYRLLF (218 aa)). 4 helical membrane passes run 166–186 (FAVM…LWIF), 204–224 (IKFY…VLVL), 241–261 (IITI…IGIS), and 339–359 (FITF…LYCL).

The protein belongs to the sphingosine N-acyltransferase family.

The protein resides in the endoplasmic reticulum membrane. It participates in mycotoxin biosynthesis. Sphingosine N-acyltransferase-like protein; part of the gene cluster that mediates the biosynthesis of fumonisins B1 (FB1), B2 (FB2), B3 (FB3), and B4 (FB4), which are carcinogenic mycotoxins. May contribute to the biosynthesis of ceramide via interaction with Cer3. Does not confer resistance to FB1. The biosynthesis starts with the FUM1-catalyzed carbon chain assembly from one molecule of acetyl-CoA, eight molecules of malonyl-CoA, and two molecules of methionine (in S-adenosyl form). The C18 polyketide chain is released from the enzyme by a nucleophilic attack of a carbanion, which is derived from R-carbon of alanine by decarboxylation, on the carbonyl carbon of polyketide acyl chain. This step is catalyzed by the pyridoxal 5'-phosphate-dependent aminoacyl transferase FUM8. The resultant 3-keto intermediate is then stereospecifically reduced to a 3-hydroxyl product by reductase FUM13. Subsequent oxidations at C-10 by the cytochrome P450 monooxygenase FUM2, C-14 and C-15 by FUM6, FUM12 or FUM15, tricarballylic esterification of the hydroxyl groups on C-14 and C-15 by acyltransferase FUM14, and C-5 hydroxylation by 2-keto-glutarate-dependent dioxygenase FUM3 furnish the biosynthesis of fumonisins. The tricarballylic moieties are most likely derived from the citric acid cycle, and their addition to the carbon backbone may involve FUM7, FUM10, FUM11 and FUM14. The chain is Sphingosine N-acyltransferase-like protein FUM17 from Gibberella moniliformis (strain M3125 / FGSC 7600) (Maize ear and stalk rot fungus).